Consider the following 264-residue polypeptide: E3 ubiquitin-protein ligase MARCHF8 (264 aa).

Residues Leu15–Pro47 are disordered. A compositionally biased stretch (polar residues) spans His17–Pro47. The RING-CH-type zinc-finger motif lies at Val45 to Glu106. Zn(2+)-binding residues include Cys53, Cys56, Cys70, Cys72, His80, Cys83, Cys96, and Cys99. 2 helical membrane passes run Cys130–Ile150 and Phe170–Val190.

It is found in the cytoplasmic vesicle membrane. The protein localises to the lysosome membrane. Its subcellular location is the early endosome membrane. The enzyme catalyses S-ubiquitinyl-[E2 ubiquitin-conjugating enzyme]-L-cysteine + [acceptor protein]-L-lysine = [E2 ubiquitin-conjugating enzyme]-L-cysteine + N(6)-ubiquitinyl-[acceptor protein]-L-lysine.. The protein operates within protein modification; protein ubiquitination. Functionally, E3 ubiquitin-protein ligase that mediates ubiquitination of cd86 and MHC class II proteins, such as hla-dr alpha and beta, and promotes their subsequent endocytosis and sorting to lysosomes via multivesicular bodies. In Xenopus tropicalis (Western clawed frog), this protein is E3 ubiquitin-protein ligase MARCHF8 (marchf8).